Reading from the N-terminus, the 446-residue chain is Methanogenesis regulatory protein FilR1 (446 aa).

Residues 297–416 (DVMIVEDDLG…QRLPEIAEEA (120 aa)) enclose the Response regulatory domain. The residue at position 350 (D350) is a 4-aspartylphosphate.

Phosphorylated by FilI.

Functionally, member of the two-component regulatory system FilI/FilRs, which is involved in the regulation of methanogenesis. Regulates its own expression, expression of the filI-filR2 operon, and of genes involved in methanogenesis such as acs1, acs4 and mtrABC. Acts by binding to the promoters. The chain is Methanogenesis regulatory protein FilR1 from Methanothrix harundinacea (strain 6Ac) (Methanosaeta harundinacea).